Consider the following 98-residue polypeptide: NADH-ubiquinone oxidoreductase chain 4L (98 aa).

The next 3 membrane-spanning stretches (helical) occupy residues 2 to 22 (PSIS…MLMF), 29 to 49 (SLLC…LIIL), and 61 to 81 (ILLL…LVTV).

The protein belongs to the complex I subunit 4L family. Core subunit of respiratory chain NADH dehydrogenase (Complex I) which is composed of 45 different subunits.

It is found in the mitochondrion inner membrane. It carries out the reaction a ubiquinone + NADH + 5 H(+)(in) = a ubiquinol + NAD(+) + 4 H(+)(out). Functionally, core subunit of the mitochondrial membrane respiratory chain NADH dehydrogenase (Complex I) which catalyzes electron transfer from NADH through the respiratory chain, using ubiquinone as an electron acceptor. Part of the enzyme membrane arm which is embedded in the lipid bilayer and involved in proton translocation. The protein is NADH-ubiquinone oxidoreductase chain 4L (MT-ND4L) of Microcebus mamiratra (Claire's mouse lemur).